The following is a 429-amino-acid chain: MVTGMIIKKIKELTKEEEEKIINRNKANFEEILPTVMEILKDVKEKGDEALKYYTKKFDGVEIEDFKVTDEEIEEAYNSVDYKVVEAIERAKENIYFFHKKQMEQIKDLNVENNGIILGQVVRAIEKVGCYVPGGRAFYPSTVLMTTIPAKVAGCEEIYITSPPTKDGKGNPATLIAGDIVGVSAIYKVGGVQAIGALAYGTETIPKVDIIVGPGNIYVTTAKKMVYGEVAIDFLAGPSEVLIIADETANAEFVALDFIAQAEHDPNASCVITTTSEKKAEEIKNKIFEEIEKAERKEIILKALENSAILIGDLEECIEFSNKYAPEHLEILTKNPEEVLNKIKHAGSVFLGEYSPVPVGDYASGTNHVLPTSQFARMSSGLNVETFLKKITYQKLDKESLKNIADIVITLAEAEGLFGHAEAVRRRLK.

Positions 131, 193, and 216 each coordinate NAD(+). Substrate contacts are provided by S239, Q261, and H264. Zn(2+)-binding residues include Q261 and H264. Active-site proton acceptor residues include E327 and H328. The substrate site is built by H328, D361, E415, and H420. D361 lines the Zn(2+) pocket. H420 provides a ligand contact to Zn(2+).

Belongs to the histidinol dehydrogenase family. Zn(2+) serves as cofactor.

The catalysed reaction is L-histidinol + 2 NAD(+) + H2O = L-histidine + 2 NADH + 3 H(+). The protein operates within amino-acid biosynthesis; L-histidine biosynthesis; L-histidine from 5-phospho-alpha-D-ribose 1-diphosphate: step 9/9. Catalyzes the sequential NAD-dependent oxidations of L-histidinol to L-histidinaldehyde and then to L-histidine. This chain is Histidinol dehydrogenase (hisD), found in Methanocaldococcus jannaschii (strain ATCC 43067 / DSM 2661 / JAL-1 / JCM 10045 / NBRC 100440) (Methanococcus jannaschii).